Reading from the N-terminus, the 397-residue chain is Na(+)/H(+) antiporter NhaA 2 (397 aa).

The next 11 helical transmembrane spans lie at 9–29 (LHNP…AMAV), 59–79 (LLLW…GLEL), 95–115 (ILPV…YTLI), 125–145 (GWAI…ALLG), 154–174 (LFLL…IAFF), 177–197 (SELS…LILM), 222–242 (SGVH…LKGE), 260–280 (VVGL…SLQG), 292–312 (LGIA…FVWL), 332–352 (GVAL…SLAF), and 371–391 (LGIL…LRFS).

It belongs to the NhaA Na(+)/H(+) (TC 2.A.33) antiporter family.

It is found in the cell inner membrane. It catalyses the reaction Na(+)(in) + 2 H(+)(out) = Na(+)(out) + 2 H(+)(in). In terms of biological role, na(+)/H(+) antiporter that extrudes sodium in exchange for external protons. This chain is Na(+)/H(+) antiporter NhaA 2, found in Magnetococcus marinus (strain ATCC BAA-1437 / JCM 17883 / MC-1).